The chain runs to 358 residues: Phenylalanine--tRNA ligase alpha subunit (358 aa).

Residue E258 coordinates Mg(2+).

This sequence belongs to the class-II aminoacyl-tRNA synthetase family. Phe-tRNA synthetase alpha subunit type 1 subfamily. In terms of assembly, tetramer of two alpha and two beta subunits. Mg(2+) is required as a cofactor.

The protein resides in the cytoplasm. The enzyme catalyses tRNA(Phe) + L-phenylalanine + ATP = L-phenylalanyl-tRNA(Phe) + AMP + diphosphate + H(+). The chain is Phenylalanine--tRNA ligase alpha subunit from Rhodospirillum centenum (strain ATCC 51521 / SW).